Reading from the N-terminus, the 190-residue chain is dTTP/UTP pyrophosphatase (190 aa).

D67 acts as the Proton acceptor in catalysis.

It belongs to the Maf family. YhdE subfamily. The cofactor is a divalent metal cation.

It is found in the cytoplasm. The catalysed reaction is dTTP + H2O = dTMP + diphosphate + H(+). The enzyme catalyses UTP + H2O = UMP + diphosphate + H(+). In terms of biological role, nucleoside triphosphate pyrophosphatase that hydrolyzes dTTP and UTP. May have a dual role in cell division arrest and in preventing the incorporation of modified nucleotides into cellular nucleic acids. In Aquifex aeolicus (strain VF5), this protein is dTTP/UTP pyrophosphatase.